A 553-amino-acid polypeptide reads, in one-letter code: Fusion glycoprotein F0 (553 aa).

An N-terminal signal peptide occupies residues 1–31 (MGSRSSTRIPVPLMLTVRVMLALSCVCPTSA). Residues 32-500 (LDGRPLAAAG…VNVKLTSTSA (469 aa)) are Extracellular-facing. Cystine bridges form between cysteine 76-cysteine 199, cysteine 362-cysteine 370, cysteine 394-cysteine 399, and cysteine 401-cysteine 424. Asparagine 85 carries an N-linked (GlcNAc...) asparagine; by host glycan. A fusion peptide region spans residues 117–141 (LIGAIIGGVALGVATAAQITAASAL). Residues 142 to 170 (IQANQNAANILLLKESIAATNEAVHEVTN) are a coiled coil. Asparagine 191 and asparagine 366 each carry an N-linked (GlcNAc...) asparagine; by host glycan. N-linked (GlcNAc...) asparagine; by host glycosylation is found at asparagine 447 and asparagine 471. A coiled-coil region spans residues 466-491 (ELGNVNNSISNALDKLEESNSKLDKV). A helical membrane pass occupies residues 501-521 (LITYIVLTVISLVCGILSLVL). Residues 522-553 (ACYLMYKQKAQQKTLLWLGNNTLDQMRATTKM) lie on the Cytoplasmic side of the membrane. Residue cysteine 523 is the site of S-palmitoyl cysteine; by host attachment.

Belongs to the paramyxoviruses fusion glycoprotein family. In terms of assembly, homotrimer of disulfide-linked F1-F2. Post-translationally, the inactive precursor F0 is glycosylated and proteolytically cleaved into F1 and F2 to be functionally active. The cleavage is mediated by cellular proteases during the transport and maturation of the polypeptide.

It localises to the virion membrane. The protein localises to the host cell membrane. Class I viral fusion protein. Under the current model, the protein has at least 3 conformational states: pre-fusion native state, pre-hairpin intermediate state, and post-fusion hairpin state. During viral and plasma cell membrane fusion, the heptad repeat (HR) regions assume a trimer-of-hairpins structure, positioning the fusion peptide in close proximity to the C-terminal region of the ectodomain. The formation of this structure appears to drive apposition and subsequent fusion of viral and plasma cell membranes. Directs fusion of viral and cellular membranes leading to delivery of the nucleocapsid into the cytoplasm. This fusion is pH independent and occurs directly at the outer cell membrane. The trimer of F1-F2 (F protein) probably interacts with HN at the virion surface. Upon HN binding to its cellular receptor, the hydrophobic fusion peptide is unmasked and interacts with the cellular membrane, inducing the fusion between cell and virion membranes. Later in infection, F proteins expressed at the plasma membrane of infected cells could mediate fusion with adjacent cells to form syncytia, a cytopathic effect that could lead to tissue necrosis. The chain is Fusion glycoprotein F0 (F) from Newcastle disease virus (strain Queensland/66) (NDV).